The chain runs to 173 residues: Bifunctional protein PyrR (173 aa).

Positions 93–105 (VILVDDVLYTGRT) match the PRPP-binding motif.

This sequence belongs to the purine/pyrimidine phosphoribosyltransferase family. PyrR subfamily. As to quaternary structure, homodimer and homohexamer; in equilibrium.

The enzyme catalyses UMP + diphosphate = 5-phospho-alpha-D-ribose 1-diphosphate + uracil. In terms of biological role, regulates transcriptional attenuation of the pyrimidine nucleotide (pyr) operon by binding in a uridine-dependent manner to specific sites on pyr mRNA. This disrupts an antiterminator hairpin in the RNA and favors formation of a downstream transcription terminator, leading to a reduced expression of downstream genes. Its function is as follows. Also displays a weak uracil phosphoribosyltransferase activity which is not physiologically significant. This is Bifunctional protein PyrR from Streptococcus suis (strain 05ZYH33).